The following is a 601-amino-acid chain: Kelch repeat and BTB domain-containing protein 8 (601 aa).

The disordered stretch occupies residues 1–25; that stretch reads MAASADLSKSSPTPNGIPSSDPASD. Residues 7-22 show a composition bias toward polar residues; it reads LSKSSPTPNGIPSSDP. The region spanning 49-117 is the BTB domain; sequence TDIVVEVDHG…AYTSRVILTE (69 aa). In terms of domain architecture, BACK spans 153–252; that stretch reads IGVFIFADHY…PLMEDTFIEK (100 aa). Kelch repeat units lie at residues 336 to 390, 391 to 441, 443 to 481, 483 to 532, and 542 to 588; these read DIYI…YCCG, KMYA…EYKE, IYVL…VYKD, IYYI…LFQN, and QVTV…FECA.

Belongs to the KBTBD8 family. Component of the BCR(KBTBD8) E3 ubiquitin ligase complex, at least composed of CUL3, KBTBD8 and RBX1.

The protein resides in the cytoplasm. It is found in the cytoskeleton. Its subcellular location is the spindle. The protein localises to the golgi apparatus. Substrate-specific adapter of a BCR (BTB-CUL3-RBX1) E3 ubiquitin ligase complex that acts as a regulator of neural crest specification. The BCR(KBTBD8) complex acts by mediating monoubiquitination of NOLC1 and TCOF1: monoubiquitination promotes the formation of a NOLC1-TCOF1 complex that acts as a platform to connect RNA polymerase I with enzymes responsible for ribosomal processing and modification, leading to remodel the translational program of differentiating cells in favor of neural crest specification. This is Kelch repeat and BTB domain-containing protein 8 (KBTBD8) from Homo sapiens (Human).